A 257-amino-acid polypeptide reads, in one-letter code: Imidazole glycerol phosphate synthase subunit HisF (257 aa).

Residues Asp11 and Asp130 contribute to the active site.

The protein belongs to the HisA/HisF family. As to quaternary structure, heterodimer of HisH and HisF.

Its subcellular location is the cytoplasm. It carries out the reaction 5-[(5-phospho-1-deoxy-D-ribulos-1-ylimino)methylamino]-1-(5-phospho-beta-D-ribosyl)imidazole-4-carboxamide + L-glutamine = D-erythro-1-(imidazol-4-yl)glycerol 3-phosphate + 5-amino-1-(5-phospho-beta-D-ribosyl)imidazole-4-carboxamide + L-glutamate + H(+). It participates in amino-acid biosynthesis; L-histidine biosynthesis; L-histidine from 5-phospho-alpha-D-ribose 1-diphosphate: step 5/9. In terms of biological role, IGPS catalyzes the conversion of PRFAR and glutamine to IGP, AICAR and glutamate. The HisF subunit catalyzes the cyclization activity that produces IGP and AICAR from PRFAR using the ammonia provided by the HisH subunit. This chain is Imidazole glycerol phosphate synthase subunit HisF, found in Vibrio parahaemolyticus serotype O3:K6 (strain RIMD 2210633).